Reading from the N-terminus, the 431-residue chain is 3-isopropylmalate dehydratase large subunit (431 aa).

Residues C308, C368, and C371 each coordinate [4Fe-4S] cluster.

It belongs to the aconitase/IPM isomerase family. LeuC type 2 subfamily. As to quaternary structure, heterodimer of LeuC and LeuD. The cofactor is [4Fe-4S] cluster.

The catalysed reaction is (2R,3S)-3-isopropylmalate = (2S)-2-isopropylmalate. The protein operates within amino-acid biosynthesis; L-leucine biosynthesis; L-leucine from 3-methyl-2-oxobutanoate: step 2/4. Catalyzes the isomerization between 2-isopropylmalate and 3-isopropylmalate, via the formation of 2-isopropylmaleate. The sequence is that of 3-isopropylmalate dehydratase large subunit from Desulfosudis oleivorans (strain DSM 6200 / JCM 39069 / Hxd3) (Desulfococcus oleovorans).